We begin with the raw amino-acid sequence, 738 residues long: Putative RNA-binding protein EEED8.10 (738 aa).

Residues 112–201 form the RRM domain; the sequence is RKIVVSNISA…QVMVVSAYVS (90 aa). Residues 211 to 237 are disordered; it reads LSDDVGSREDTPLSRASSTQSLASGSE. The span at 224-237 shows a compositional bias: polar residues; sequence SRASSTQSLASGSE. The F-box domain maps to 239–297; that stretch reads SFNLGNVPDKILRRVISFLPIHETIRLERVNKKFMEESIKSWELVNKIALARETVFNKQ.

The protein is Putative RNA-binding protein EEED8.10 of Caenorhabditis elegans.